The chain runs to 133 residues: Small ribosomal subunit protein uS8 (133 aa).

The protein belongs to the universal ribosomal protein uS8 family. In terms of assembly, part of the 30S ribosomal subunit. Contacts proteins S5 and S12.

Functionally, one of the primary rRNA binding proteins, it binds directly to 16S rRNA central domain where it helps coordinate assembly of the platform of the 30S subunit. This chain is Small ribosomal subunit protein uS8, found in Prochlorococcus marinus subsp. pastoris (strain CCMP1986 / NIES-2087 / MED4).